A 138-amino-acid polypeptide reads, in one-letter code: Large ribosomal subunit protein bL19 (138 aa).

This sequence belongs to the bacterial ribosomal protein bL19 family.

Its function is as follows. This protein is located at the 30S-50S ribosomal subunit interface and may play a role in the structure and function of the aminoacyl-tRNA binding site. In Rickettsia typhi (strain ATCC VR-144 / Wilmington), this protein is Large ribosomal subunit protein bL19.